A 595-amino-acid polypeptide reads, in one-letter code: uncharacterized protein (595 aa).

An N-terminal signal peptide occupies residues 1-23; sequence MLSLSSPPWLLLLVLFFFANGSA. Residues N31, N63, N88, N112, N144, N187, N205, N389, N480, N492, and N506 are each glycosylated (N-linked (GlcNAc...) asparagine). Residues 61 to 83 are compositionally biased toward polar residues; the sequence is LENQTASSSNLNTNNEASDEQTG. Disordered stretches follow at residues 61-119 and 141-164; these read LENQ…VSSL and TALN…TKGE. Residues 84-119 show a composition bias toward low complexity; the sequence is NSNSNTSSHSRNINGLPSSNSNIDNANSNSSSVSSL.

It is found in the secreted. This is an uncharacterized protein from Drosophila melanogaster (Fruit fly).